The sequence spans 425 residues: Serine--tRNA ligase (425 aa).

Residue 228-230 participates in L-serine binding; it reads TAE. ATP is bound at residue 259–261; sequence RSE. Glu282 contributes to the L-serine binding site. 346–349 is a binding site for ATP; sequence EIAS. Ser382 serves as a coordination point for L-serine.

It belongs to the class-II aminoacyl-tRNA synthetase family. Type-1 seryl-tRNA synthetase subfamily. As to quaternary structure, homodimer. The tRNA molecule binds across the dimer.

The protein resides in the cytoplasm. The catalysed reaction is tRNA(Ser) + L-serine + ATP = L-seryl-tRNA(Ser) + AMP + diphosphate + H(+). The enzyme catalyses tRNA(Sec) + L-serine + ATP = L-seryl-tRNA(Sec) + AMP + diphosphate + H(+). The protein operates within aminoacyl-tRNA biosynthesis; selenocysteinyl-tRNA(Sec) biosynthesis; L-seryl-tRNA(Sec) from L-serine and tRNA(Sec): step 1/1. Its function is as follows. Catalyzes the attachment of serine to tRNA(Ser). Is also able to aminoacylate tRNA(Sec) with serine, to form the misacylated tRNA L-seryl-tRNA(Sec), which will be further converted into selenocysteinyl-tRNA(Sec). This is Serine--tRNA ligase from Rickettsia massiliae (strain Mtu5).